We begin with the raw amino-acid sequence, 68 residues long: U-reduvitoxin-Pr3a (68 aa).

Residues 1–22 (MKAGMKLVLVLVIASIALLALA) form the signal peptide. 3 disulfides stabilise this stretch: cysteine 29/cysteine 47, cysteine 36/cysteine 52, and cysteine 46/cysteine 59.

It belongs to the venom Ptu1-like knottin family. As to expression, expressed by the venom gland.

The protein resides in the secreted. Its function is as follows. Binds reversibly and blocks P/Q-type voltage-gated calcium channels (Cav). This chain is U-reduvitoxin-Pr3a, found in Platymeris rhadamanthus (Red spot assassin bug).